A 362-amino-acid polypeptide reads, in one-letter code: Peptide chain release factor 1 (362 aa).

Position 237 is an N5-methylglutamine (Q237).

It belongs to the prokaryotic/mitochondrial release factor family. In terms of processing, methylated by PrmC. Methylation increases the termination efficiency of RF1.

The protein localises to the cytoplasm. Its function is as follows. Peptide chain release factor 1 directs the termination of translation in response to the peptide chain termination codons UAG and UAA. This chain is Peptide chain release factor 1, found in Aeromonas salmonicida (strain A449).